A 253-amino-acid polypeptide reads, in one-letter code: Putative tyrosine-protein phosphatase OCA1 (253 aa).

Residues 1 to 21 are compositionally biased toward basic and acidic residues; that stretch reads MHRTSIVEELERHQQDQKADQ. The disordered stretch occupies residues 1 to 84; that stretch reads MHRTSIVEEL…PRMKTIVKPP (84 aa). Residues 27–65 show a composition bias toward polar residues; that stretch reads SDASNSALQESSDPRLSTTDNTNTPEINVNDQQQEQQVA. The 157-residue stretch at 93 to 249 folds into the Tyrosine-protein phosphatase domain; it reads NFGPVERNLY…IIVYPESAPE (157 aa). Cysteine 186 acts as the Phosphocysteine intermediate in catalysis.

Belongs to the protein-tyrosine phosphatase family.

It is found in the cytoplasm. The enzyme catalyses O-phospho-L-tyrosyl-[protein] + H2O = L-tyrosyl-[protein] + phosphate. In terms of biological role, putative tyrosine-protein phosphatase required for protection against superoxide stress. The protein is Putative tyrosine-protein phosphatase OCA1 (OCA1) of Yarrowia lipolytica (strain CLIB 122 / E 150) (Yeast).